The chain runs to 71 residues: Large ribosomal subunit protein uL29 (71 aa).

The segment at 1 to 20 (MKARELQELRQGSSPQDLQE) is disordered.

Belongs to the universal ribosomal protein uL29 family.

This is Large ribosomal subunit protein uL29 from Clostridium kluyveri (strain ATCC 8527 / DSM 555 / NBRC 12016 / NCIMB 10680 / K1).